Reading from the N-terminus, the 629-residue chain is DNA ligase B (629 aa).

Residue Lys-151 is the N6-AMP-lysine intermediate of the active site. The span at 588 to 597 (LQKQHGTNTR) shows a compositional bias: polar residues. The interval 588–629 (LQKQHGTNTRNEQKGDVRRVDVKQDNGTTWLPEQDSNLRPND) is disordered. The segment covering 598–611 (NEQKGDVRRVDVKQ) has biased composition (basic and acidic residues). Positions 612 to 629 (DNGTTWLPEQDSNLRPND) are enriched in polar residues.

Belongs to the NAD-dependent DNA ligase family. LigB subfamily.

The enzyme catalyses NAD(+) + (deoxyribonucleotide)n-3'-hydroxyl + 5'-phospho-(deoxyribonucleotide)m = (deoxyribonucleotide)n+m + AMP + beta-nicotinamide D-nucleotide.. Catalyzes the formation of phosphodiester linkages between 5'-phosphoryl and 3'-hydroxyl groups in double-stranded DNA using NAD as a coenzyme and as the energy source for the reaction. This is DNA ligase B from Chromohalobacter salexigens (strain ATCC BAA-138 / DSM 3043 / CIP 106854 / NCIMB 13768 / 1H11).